We begin with the raw amino-acid sequence, 125 residues long: Glycine cleavage system H protein (125 aa).

In terms of domain architecture, Lipoyl-binding spans 23–104 (VVYIGITDYA…PYENWILKVK (82 aa)). N6-lipoyllysine is present on lysine 64.

Belongs to the GcvH family. As to quaternary structure, the glycine cleavage system is composed of four proteins: P, T, L and H. It depends on (R)-lipoate as a cofactor.

The glycine cleavage system catalyzes the degradation of glycine. The H protein shuttles the methylamine group of glycine from the P protein to the T protein. The chain is Glycine cleavage system H protein from Clostridioides difficile (strain 630) (Peptoclostridium difficile).